The chain runs to 100 residues: Co-chaperonin GroES (100 aa).

It belongs to the GroES chaperonin family. As to quaternary structure, heptamer of 7 subunits arranged in a ring. Interacts with the chaperonin GroEL.

The protein localises to the cytoplasm. Together with the chaperonin GroEL, plays an essential role in assisting protein folding. The GroEL-GroES system forms a nano-cage that allows encapsulation of the non-native substrate proteins and provides a physical environment optimized to promote and accelerate protein folding. GroES binds to the apical surface of the GroEL ring, thereby capping the opening of the GroEL channel. This is Co-chaperonin GroES from Mycolicibacterium paratuberculosis (strain ATCC BAA-968 / K-10) (Mycobacterium paratuberculosis).